The following is a 145-amino-acid chain: Large ribosomal subunit protein bL9 (145 aa).

It belongs to the bacterial ribosomal protein bL9 family.

Functionally, binds to the 23S rRNA. In Mesomycoplasma hyopneumoniae (strain 7448) (Mycoplasma hyopneumoniae), this protein is Large ribosomal subunit protein bL9.